Consider the following 146-residue polypeptide: Ferric uptake regulation protein 2 (146 aa).

Zn(2+) is bound by residues C96 and C99.

This sequence belongs to the Fur family.

The protein localises to the cytoplasm. Its function is as follows. Acts as a global negative controlling element, employing Fe(2+) as a cofactor to bind the operator of the repressed genes. This is Ferric uptake regulation protein 2 (fur2) from Mycolicibacterium fortuitum (Mycobacterium fortuitum).